The primary structure comprises 364 residues: tRNA 2-selenouridine synthase (364 aa).

The 124-residue stretch at 14-137 folds into the Rhodanese domain; the sequence is LIADTPIIDV…LRQTAIQATI (124 aa). Cys-97 (S-selanylcysteine intermediate) is an active-site residue.

Belongs to the SelU family. As to quaternary structure, monomer.

The enzyme catalyses 5-methylaminomethyl-2-thiouridine(34) in tRNA + selenophosphate + (2E)-geranyl diphosphate + H2O + H(+) = 5-methylaminomethyl-2-selenouridine(34) in tRNA + (2E)-thiogeraniol + phosphate + diphosphate. It catalyses the reaction 5-methylaminomethyl-2-thiouridine(34) in tRNA + (2E)-geranyl diphosphate = 5-methylaminomethyl-S-(2E)-geranyl-thiouridine(34) in tRNA + diphosphate. The catalysed reaction is 5-methylaminomethyl-S-(2E)-geranyl-thiouridine(34) in tRNA + selenophosphate + H(+) = 5-methylaminomethyl-2-(Se-phospho)selenouridine(34) in tRNA + (2E)-thiogeraniol. It carries out the reaction 5-methylaminomethyl-2-(Se-phospho)selenouridine(34) in tRNA + H2O = 5-methylaminomethyl-2-selenouridine(34) in tRNA + phosphate. In terms of biological role, involved in the post-transcriptional modification of the uridine at the wobble position (U34) of tRNA(Lys), tRNA(Glu) and tRNA(Gln). Catalyzes the conversion of 2-thiouridine (S2U-RNA) to 2-selenouridine (Se2U-RNA). Acts in a two-step process involving geranylation of 2-thiouridine (S2U) to S-geranyl-2-thiouridine (geS2U) and subsequent selenation of the latter derivative to 2-selenouridine (Se2U) in the tRNA chain. The chain is tRNA 2-selenouridine synthase from Escherichia coli (strain SE11).